Here is a 209-residue protein sequence, read N- to C-terminus: Large ribosomal subunit protein uL3 (209 aa).

It belongs to the universal ribosomal protein uL3 family. Part of the 50S ribosomal subunit. Forms a cluster with proteins L14 and L19.

In terms of biological role, one of the primary rRNA binding proteins, it binds directly near the 3'-end of the 23S rRNA, where it nucleates assembly of the 50S subunit. The chain is Large ribosomal subunit protein uL3 from Lactiplantibacillus plantarum (strain ATCC BAA-793 / NCIMB 8826 / WCFS1) (Lactobacillus plantarum).